A 588-amino-acid polypeptide reads, in one-letter code: MEVIHGRPHCCRNLEGADILSNTFYSNGLHTPYETTIRPTASQARYQELREALPQCRLRWGADREYGGVLPVSLPEEHRPKCEPPRLMSKGHQHYGFGGEIWPKKLPIEQYYYMTQNKKSDVYGNDSLLPKPPNSAVKEICSPYPIEHPYHTHISRGSVFPTFTSPKDLYTGIKARTQQPFPPTVPTKACDTTILKTRGNPYRYELLDFPMDSKKKALTWPGQGVYYDFPKFVEKNKPVFYPKPPKTFAPNSSVNPWDTMSSAKDANIQRNLERSHWLTSYAHDFTGLGPMSPLELDDYHEKELAELTGQIGFDPQPQEKFHPALKTPRPLDGRIARLTQNQRPLEATVQIPPPCPDCTPRVLCAFHTFIPTSAEIMAMNNNLLSGITHKNQDVEEKIKEEQGLMSTCPLPTCYESKDLTSLYDVQSFPKITDTKKTDDLYWRQLEMKPLPISCSKSNHYIDYEPLKSAYRDPYAMCPNPVRLSKSNILQNKTDTADFTFDNFLSKPEFLGMNMESNEETRPLLDWIPRAGVPKHHSNLRNLRNTFSKSMAQKRLHNSIQEEQKDLRDKLQCGMRHQFFGYNGHHFYN.

Phosphothreonine is present on Thr-219. A phosphoserine mark is found at Ser-406, Ser-421, and Ser-427. Phosphotyrosine is present on Tyr-441. Residues Ser-457, Ser-484, and Ser-516 each carry the phosphoserine modification.

As to expression, predominantly expressed in the testes.

It localises to the cytoplasm. The protein resides in the cytoskeleton. Its subcellular location is the microtubule organizing center. The protein localises to the centrosome. It is found in the flagellum axoneme. Functionally, microtubule inner protein (MIP) part of the dynein-decorated doublet microtubules (DMTs) in flagellum axoneme. May serve to reinforce and thus stabilize the microtubule structure in the sperm flagella. In Mus musculus (Mouse), this protein is Sperm-associated microtubule inner protein 4 (Spmip4).